A 2157-amino-acid chain; its full sequence is Genome polyprotein (2157 aa).

Glycine 2 is lipidated: N-myristoyl glycine; by host. Residues 2 to 1470 (GAQVSRQNVG…DLNIANSIIA (1469 aa)) are Cytoplasmic-facing. Positions 567–584 (PIEQNPVENYIDEVLNEV) are amphipathic alpha-helix. Catalysis depends on for protease 2A activity residues histidine 875 and aspartate 892. Residues cysteine 909 and cysteine 911 each contribute to the Zn(2+) site. The active-site For protease 2A activity is cysteine 963. Cysteine 969 and histidine 971 together coordinate Zn(2+). Residues 1095-1164 (SDSWLKKFTE…NLRAADSATQ (70 aa)) are membrane-binding. The interval 1095-1228 (SDSWLKKFTE…PPGTGKSITT (134 aa)) is oligomerization. The interval 1116-1120 (GNKIS) is RNA-binding. The SF3 helicase domain maps to 1188 to 1350 (EAKRIKVLYN…YKDTQGKLDV (163 aa)). Zn(2+) is bound by residues cysteine 1357, cysteine 1368, and cysteine 1373. The C4-type; degenerate zinc-finger motif lies at 1357-1373 (CNVNTKIGNAKCCPFVC). The interval 1400–1407 (EDKRRRQV) is RNA-binding. Positions 1411–1416 (MSAIFQ) are oligomerization. Residues 1471 to 1486 (IIANIISIAGIIFVIY) lie within the membrane without spanning it. Residues 1487–2157 (KLFCSLQGPY…LLKHEWYEKF (671 aa)) lie on the Cytoplasmic side of the membrane. At tyrosine 1496 the chain carries O-(5'-phospho-RNA)-tyrosine. Positions 1515–1693 (GPEEEFGRSI…FSAMLLRSYF (179 aa)) constitute a Peptidase C3 domain. Residues histidine 1554, glutamate 1585, and cysteine 1661 each act as for protease 3C activity in the active site. The RdRp catalytic domain occupies 1925-2038 (DCIMAFDYTN…SYKYTLDMEA (114 aa)). 2 residues coordinate Mg(2+): aspartate 1931 and aspartate 2024.

Belongs to the picornaviruses polyprotein family. In terms of assembly, interacts with capsid protein VP1 and capsid protein VP3 to form heterotrimeric protomers. As to quaternary structure, interacts with capsid protein VP0, and capsid protein VP3 to form heterotrimeric protomers. Five protomers subsequently associate to form pentamers which serve as building blocks for the capsid. Interacts with capsid protein VP2, capsid protein VP3 and capsid protein VP4 following cleavage of capsid protein VP0. Interacts with capsid protein VP1 and capsid protein VP3 in the mature capsid. In terms of assembly, interacts with capsid protein VP0 and capsid protein VP1 to form heterotrimeric protomers. Five protomers subsequently associate to form pentamers which serve as building blocks for the capsid. Interacts with capsid protein VP4 in the mature capsid. Interacts with protein 2C; this interaction may be important for virion morphogenesis. As to quaternary structure, interacts with capsid protein VP1 and capsid protein VP3. Homodimer. In terms of assembly, homohexamer; forms a hexameric ring structure with 6-fold symmetry characteristic of AAA+ ATPases. Interacts (via N-terminus) with host RTN3 (via reticulon domain); this interaction is important for viral replication. Interacts with capsid protein VP3; this interaction may be important for virion morphogenesis. As to quaternary structure, interacts with protein 3CD. Homodimer. Interacts with host GBF1. Interacts (via GOLD domain) with host ACBD3 (via GOLD domain); this interaction allows the formation of a viral protein 3A/ACBD3 heterotetramer with a 2:2 stoichiometry, which will stimulate the recruitment of host PI4KB in order to synthesize PI4P at the viral RNA replication sites. In terms of assembly, interacts with RNA-directed RNA polymerase. As to quaternary structure, interacts with protein 3AB and with RNA-directed RNA polymerase. Interacts with Viral protein genome-linked and with protein 3CD. The cofactor is Mg(2+). In terms of processing, specific enzymatic cleavages in vivo by the viral proteases yield processing intermediates and the mature proteins. Myristoylation is required for the formation of pentamers during virus assembly. Further assembly of 12 pentamers and a molecule of genomic RNA generates the provirion. Post-translationally, during virion maturation, immature virions are rendered infectious following cleavage of VP0 into VP4 and VP2. This maturation seems to be an autocatalytic event triggered by the presence of RNA in the capsid and it is followed by a conformational change infectious virion. In terms of processing, myristoylation is required during RNA encapsidation and formation of the mature virus particle. VPg is uridylylated by the polymerase into VPg-pUpU. This acts as a nucleotide-peptide primer for the genomic RNA replication.

The protein resides in the virion. Its subcellular location is the host cytoplasm. It localises to the host cytoplasmic vesicle membrane. The protein localises to the host nucleus. It carries out the reaction a ribonucleoside 5'-triphosphate + H2O = a ribonucleoside 5'-diphosphate + phosphate + H(+). The enzyme catalyses Selective cleavage of Tyr-|-Gly bond in the picornavirus polyprotein.. It catalyses the reaction RNA(n) + a ribonucleoside 5'-triphosphate = RNA(n+1) + diphosphate. The catalysed reaction is Selective cleavage of Gln-|-Gly bond in the poliovirus polyprotein. In other picornavirus reactions Glu may be substituted for Gln, and Ser or Thr for Gly.. With respect to regulation, replication or transcription is subject to high level of random mutations by the nucleotide analog ribavirin. In terms of biological role, forms an icosahedral capsid of pseudo T=3 symmetry with capsid proteins VP2 and VP3. The capsid is 300 Angstroms in diameter, composed of 60 copies of each capsid protein and enclosing the viral positive strand RNA genome. Capsid protein VP1 mainly forms the vertices of the capsid. Capsid protein VP1 interacts with host cell receptor to provide virion attachment to target host cells. This attachment induces virion internalization. Tyrosine kinases are probably involved in the entry process. After binding to its receptor, the capsid undergoes conformational changes. Capsid protein VP1 N-terminus (that contains an amphipathic alpha-helix) and capsid protein VP4 are externalized. Together, they shape a pore in the host membrane through which viral genome is translocated to host cell cytoplasm. Forms an icosahedral capsid of pseudo T=3 symmetry with capsid proteins VP2 and VP3. The capsid is 300 Angstroms in diameter, composed of 60 copies of each capsid protein and enclosing the viral positive strand RNA genome. Its function is as follows. Lies on the inner surface of the capsid shell. After binding to the host receptor, the capsid undergoes conformational changes. Capsid protein VP4 is released, Capsid protein VP1 N-terminus is externalized, and together, they shape a pore in the host membrane through which the viral genome is translocated into the host cell cytoplasm. Functionally, component of immature procapsids, which is cleaved into capsid proteins VP4 and VP2 after maturation. Allows the capsid to remain inactive before the maturation step. In terms of biological role, cysteine protease that cleaves viral polyprotein and specific host proteins. It is responsible for the autocatalytic cleavage between the P1 and P2 regions, which is the first cleavage occurring in the polyprotein. Also cleaves the host translation initiation factor EIF4G1, in order to shut down the capped cellular mRNA translation. Inhibits the host nucleus-cytoplasm protein and RNA trafficking by cleaving host members of the nuclear pores. Counteracts stress granule formation probably by antagonizing its assembly or promoting its dissassembly. Plays an essential role in the virus replication cycle by acting as a viroporin. Creates a pore in the host endoplasmic reticulum and as a consequence releases Ca2+ in the cytoplasm of infected cell. In turn, high levels of cytoplasmic calcium may trigger membrane trafficking and transport of viral ER-associated proteins to viroplasms, sites of viral genome replication. Its function is as follows. Induces and associates with structural rearrangements of intracellular membranes. Displays RNA-binding, nucleotide binding and NTPase activities. May play a role in virion morphogenesis and viral RNA encapsidation by interacting with the capsid protein VP3. Functionally, localizes the viral replication complex to the surface of membranous vesicles. Together with protein 3CD binds the Cis-Active RNA Element (CRE) which is involved in RNA synthesis initiation. Acts as a cofactor to stimulate the activity of 3D polymerase, maybe through a nucleid acid chaperone activity. In terms of biological role, localizes the viral replication complex to the surface of membranous vesicles. It inhibits host cell endoplasmic reticulum-to-Golgi apparatus transport and causes the disassembly of the Golgi complex, possibly through GBF1 interaction. This would result in depletion of MHC, trail receptors and IFN receptors at the host cell surface. Plays an essential role in viral RNA replication by recruiting ACBD3 and PI4KB at the viral replication sites, thereby allowing the formation of the rearranged membranous structures where viral replication takes place. Acts as a primer for viral RNA replication and remains covalently bound to viral genomic RNA. VPg is uridylylated prior to priming replication into VPg-pUpU. The oriI viral genomic sequence may act as a template for this. The VPg-pUpU is then used as primer on the genomic RNA poly(A) by the RNA-dependent RNA polymerase to replicate the viral genome. During genome replication, the VPg-RNA linkage is removed by the host TDP2, thereby accelerating replication. During the late stage of the replication cycle, host TDP2 is excluded from sites of viral RNA synthesis and encapsidation, allowing for the generation of progeny virions. Its function is as follows. Involved in the viral replication complex and viral polypeptide maturation. It exhibits protease activity with a specificity and catalytic efficiency that is different from protease 3C. Protein 3CD lacks polymerase activity. Protein 3CD binds to the 5'UTR of the viral genome. Functionally, major viral protease that mediates proteolytic processing of the polyprotein. Cleaves host EIF5B, contributing to host translation shutoff. Also cleaves host PABPC1, contributing to host translation shutoff. In terms of biological role, replicates the viral genomic RNA on the surface of intracellular membranes. May form linear arrays of subunits that propagate along a strong head-to-tail interaction called interface-I. Covalently attaches UMP to a tyrosine of VPg, which is used to prime RNA synthesis. The positive stranded RNA genome is first replicated at virus induced membranous vesicles, creating a dsRNA genomic replication form. This dsRNA is then used as template to synthesize positive stranded RNA genomes. ss(+)RNA genomes are either translated, replicated or encapsidated. This is Genome polyprotein from Homo sapiens (Human).